Consider the following 47-residue polypeptide: Large ribosomal subunit protein bL34 (47 aa).

The protein belongs to the bacterial ribosomal protein bL34 family.

This Nocardia farcinica (strain IFM 10152) protein is Large ribosomal subunit protein bL34.